The primary structure comprises 139 residues: Small ribosomal subunit protein bS6 (139 aa).

Residues 97–139 (TEASPMAKAKDERDSRRSSEGERRSAPAEATEEVKETAEKAAE) form a disordered region. Residues 104-139 (KAKDERDSRRSSEGERRSAPAEATEEVKETAEKAAE) are compositionally biased toward basic and acidic residues.

This sequence belongs to the bacterial ribosomal protein bS6 family.

Binds together with bS18 to 16S ribosomal RNA. The polypeptide is Small ribosomal subunit protein bS6 (Shewanella sediminis (strain HAW-EB3)).